The primary structure comprises 211 residues: Transcriptional regulatory protein RcsA (211 aa).

Residues 135 to 200 (LDVHPLTLSQ…VIYHVVRLTD (66 aa)) form the HTH luxR-type domain. The segment at residues 159–178 (TIQISDKMQIKAKTVSSHKG) is a DNA-binding region (H-T-H motif).

This sequence belongs to the RcsA family.

Functionally, component of the Rcs signaling system, which controls transcription of numerous genes. Binds to DNA to regulate expression of genes. This chain is Transcriptional regulatory protein RcsA, found in Pantoea stewartii subsp. stewartii (Erwinia stewartii).